Here is a 1232-residue protein sequence, read N- to C-terminus: Dynactin subunit 1 (1232 aa).

Residues glycine 31–arginine 73 form the CAP-Gly domain. 2 disordered regions span residues aspartate 82–lysine 183 and serine 339–threonine 358. The segment covering threonine 86 to threonine 95 has biased composition (low complexity). The span at proline 108–proline 117 shows a compositional bias: polar residues. The segment covering serine 118–serine 130 has biased composition (low complexity). Over residues glutamate 133–glutamine 144 the composition is skewed to polar residues. Over residues proline 146–valine 163 the composition is skewed to low complexity. 4 coiled-coil regions span residues glycine 170 to glutamine 505, glutamate 908 to glutamate 1005, leucine 1046 to histidine 1071, and alanine 1136 to serine 1166. Basic and acidic residues predominate over residues serine 172 to lysine 183.

The protein belongs to the dynactin 150 kDa subunit family. As to quaternary structure, monomer and homodimer. Subunit of dynactin, a multiprotein complex part of a tripartite complex with dynein and a adapter, such as BICDL1, BICD2 or HOOK3. The dynactin complex is built around ACTR1A/ACTB filament and consists of an actin-related filament composed of a shoulder domain, a pointed end and a barbed end. Its length is defined by its flexible shoulder domain. The soulder is composed of 2 DCTN1 subunits, 4 DCTN2 and 2 DCTN3. DCTN1/p150(glued) binds directly to microtubules and to cytoplasmic dynein.

It localises to the cytoplasm. The protein resides in the cytoskeleton. The protein localises to the microtubule organizing center. It is found in the centrosome. Its subcellular location is the centriole. It localises to the spindle. The protein resides in the cell cortex. In terms of biological role, part of the dynactin complex that activates the molecular motor dynein for ultra-processive transport along microtubules. Plays a key role in dynein-mediated retrograde transport of vesicles and organelles along microtubules by recruiting and tethering dynein to microtubules. Binds to both dynein and microtubules providing a link between specific cargos, microtubules and dynein. Essential for targeting dynein to microtubule plus ends, recruiting dynein to membranous cargos and enhancing dynein processivity (the ability to move along a microtubule for a long distance without falling off the track). Can also act as a brake to slow the dynein motor during motility along the microtubule. Can regulate microtubule stability by promoting microtubule formation, nucleation and polymerization and by inhibiting microtubule catastrophe in neurons. Inhibits microtubule catastrophe by binding both to microtubules and to tubulin, leading to enhanced microtubule stability along the axon. Plays a role in metaphase spindle orientation. Plays a role in centriole cohesion and subdistal appendage organization and function. Its recruitment to the centriole in a KIF3A-dependent manner is essential for the maintenance of centriole cohesion and the formation of subdistal appendage. Also required for microtubule anchoring at the mother centriole. Plays a role in primary cilia formation. In Xenopus laevis (African clawed frog), this protein is Dynactin subunit 1 (dctn1).